The chain runs to 202 residues: Ras-related protein RIC1 (202 aa).

GTP contacts are provided by residues Gly15–Cys23, Tyr33–Thr40, Asp63–Gln67, Asn121–Asp124, and Ser151–Lys153. The short motif at Tyr37–Phe45 is the Effector region element. The segment covering Ala174–Ala185 has biased composition (polar residues). The segment at Ala174 to Ser202 is disordered. S-geranylgeranyl cysteine attachment occurs at residues Cys200 and Cys201.

This sequence belongs to the small GTPase superfamily. Rab family.

It is found in the cell membrane. In terms of biological role, possesses GTPase activity. The protein is Ras-related protein RIC1 (RIC1) of Oryza sativa subsp. japonica (Rice).